The sequence spans 257 residues: Phycoerythrobilin:ferredoxin oxidoreductase (257 aa).

This sequence belongs to the HY2 family.

It carries out the reaction (3Z)-phycoerythrobilin + oxidized 2[4Fe-4S]-[ferredoxin] = 15,16-dihydrobiliverdin + reduced 2[4Fe-4S]-[ferredoxin] + 2 H(+). In terms of biological role, catalyzes the two-electron reduction of the C2 and C3(1) diene system of 15,16-dihydrobiliverdin. This chain is Phycoerythrobilin:ferredoxin oxidoreductase (pebB), found in Prochlorococcus marinus subsp. pastoris (strain CCMP1986 / NIES-2087 / MED4).